Consider the following 188-residue polypeptide: Dual specificity protein phosphatase 18 (188 aa).

A Tyrosine-protein phosphatase domain is found at 19–160; it reads GLSQITKSLY…LIHYEFQLFG (142 aa). Positions 95–141 are sufficient for mitochondrial localization; the sequence is MKQGRTLLHCAAGVSRSAALCLAYLMKYHAMSLLDAHTWTKSCRPII. Cys-104 acts as the Phosphocysteine intermediate in catalysis.

Belongs to the protein-tyrosine phosphatase family. Non-receptor class dual specificity subfamily.

Its subcellular location is the cytoplasm. The protein resides in the nucleus. It is found in the mitochondrion inner membrane. It catalyses the reaction O-phospho-L-tyrosyl-[protein] + H2O = L-tyrosyl-[protein] + phosphate. The enzyme catalyses O-phospho-L-seryl-[protein] + H2O = L-seryl-[protein] + phosphate. The catalysed reaction is O-phospho-L-threonyl-[protein] + H2O = L-threonyl-[protein] + phosphate. Can dephosphorylate single and diphosphorylated synthetic MAPK peptides, with preference for the phosphotyrosine and diphosphorylated forms over phosphothreonine. In vitro, dephosphorylates p-nitrophenyl phosphate (pNPP). The sequence is that of Dual specificity protein phosphatase 18 (DUSP18) from Pongo abelii (Sumatran orangutan).